The primary structure comprises 363 residues: 3-dehydroquinate synthase (363 aa).

Residues Gly109–Asp113, Thr133–Thr134, Lys146, and Lys155 contribute to the NAD(+) site. Zn(2+) contacts are provided by Glu188, His251, and His267.

It belongs to the sugar phosphate cyclases superfamily. Dehydroquinate synthase family. Requires NAD(+) as cofactor. Co(2+) serves as cofactor. It depends on Zn(2+) as a cofactor.

The protein localises to the cytoplasm. It catalyses the reaction 7-phospho-2-dehydro-3-deoxy-D-arabino-heptonate = 3-dehydroquinate + phosphate. The protein operates within metabolic intermediate biosynthesis; chorismate biosynthesis; chorismate from D-erythrose 4-phosphate and phosphoenolpyruvate: step 2/7. Catalyzes the conversion of 3-deoxy-D-arabino-heptulosonate 7-phosphate (DAHP) to dehydroquinate (DHQ). In Streptomyces coelicolor (strain ATCC BAA-471 / A3(2) / M145), this protein is 3-dehydroquinate synthase.